Reading from the N-terminus, the 358-residue chain is Tubulin-like protein TubZ (358 aa).

Residues 12 to 16 (QGGGN), threonine 95, 99 to 101 (GTG), glutamate 132, asparagine 164, glutamate 170, and asparagine 174 each bind GDP. Asparagine 182 is a GTP binding site.

This sequence belongs to the FtsZ family. TubZ subfamily. Monomer. In the presence of Mg(2+) and GTP assembles into 2-stranded filaments which coalesce into bundles. Binds a centromere-like site (tubC)-TubR complex. The TubZ-TubR-tubC complex bind to TubY which reshapes the filament bundles into rings. A later paper by the same group shows 4-stranded filament formation and suggests the 2-stranded form is a short-lived intermediate.

The protein localises to the host cytoplasm. It carries out the reaction GTP + H2O = GDP + phosphate + H(+). A tubulin-like, filament forming GTPase; the motor component of the type III partition system presumably used to ensure correct segregation of this bacteriophage. In the presence of Mg(2+) and GTP (or GTP-gamma-S) assembles into filaments which upon polymerization are almost exclusively bound to GDP. Filament formation is cooperative, requiring a critical concentration. Formation occurs very quickly and is followed by disassembly as GTP is consumed. Unlike its plasmid homolog in B.thuringiensis (AC Q8KNP3) GTP-gamma-S does not alter filament formation. When forced to assemble with GDP instead of GTP it makes much stiffer, thicker filaments. The filaments bind a DNA centromere-like site (tubC)-TubR complex which extends to surround the TubZ filaments. Highly dynamic filaments grow at the plus end and depolymerize at the minus end, a process called treadmilling. TubR-tubC complexes track the depolymerizing minus end of the filament, probably pulling phage DNA within the cell. The sequence is that of Tubulin-like protein TubZ from Clostridium botulinum C phage (Clostridium botulinum C bacteriophage).